Here is a 184-residue protein sequence, read N- to C-terminus: ATP-dependent protease subunit HslV (184 aa).

Thr12 is a catalytic residue. Na(+)-binding residues include Ala166, Cys169, and Thr172.

The protein belongs to the peptidase T1B family. HslV subfamily. A double ring-shaped homohexamer of HslV is capped on each side by a ring-shaped HslU homohexamer. The assembly of the HslU/HslV complex is dependent on binding of ATP.

It localises to the cytoplasm. The enzyme catalyses ATP-dependent cleavage of peptide bonds with broad specificity.. With respect to regulation, allosterically activated by HslU binding. In terms of biological role, protease subunit of a proteasome-like degradation complex believed to be a general protein degrading machinery. The protein is ATP-dependent protease subunit HslV of Brucella melitensis biotype 1 (strain ATCC 23456 / CCUG 17765 / NCTC 10094 / 16M).